Consider the following 149-residue polypeptide: Alpha-crystallin A chain (149 aa).

The sHSP domain maps to 41–149 (LFRSVLESGI…DASHGERPIP (109 aa)). 4 residues coordinate Zn(2+): histidine 89, glutamate 91, histidine 96, and histidine 143.

The protein belongs to the small heat shock protein (HSP20) family. As to quaternary structure, heteropolymer composed of three CRYAA and one CRYAB subunits. Inter-subunit bridging via zinc ions enhances stability, which is crucial as there is no protein turn over in the lens. Can also form homodimers and homotetramers (dimers of dimers) which serve as the building blocks of homooligomers. Within homooligomers, the zinc-binding motif is created from residues of 3 different molecules. His-89 and Glu-91 from one molecule are ligands of the zinc ion, and His-96 and His-143 residues from additional molecules complete the site with tetrahedral coordination geometry. Part of a complex required for lens intermediate filament formation composed of BFSP1, BFSP2 and CRYAA.

Its subcellular location is the cytoplasm. It is found in the nucleus. Functionally, contributes to the transparency and refractive index of the lens. May act as a chaperone, preventing aggregation of various proteins under a wide range of stress conditions. The polypeptide is Alpha-crystallin A chain (CRYAA) (Columba livia (Rock dove)).